Here is a 940-residue protein sequence, read N- to C-terminus: Valine--tRNA ligase (940 aa).

Positions 47–57 (PNVTGILHMGH) match the 'HIGH' region motif. The short motif at 564-568 (KLSKS) is the 'KMSKS' region element. Residue Lys-567 participates in ATP binding. Residues 872–938 (PMEHITKERN…LQSILDKLAS (67 aa)) adopt a coiled-coil conformation.

The protein belongs to the class-I aminoacyl-tRNA synthetase family. ValS type 1 subfamily. As to quaternary structure, monomer.

It is found in the cytoplasm. The catalysed reaction is tRNA(Val) + L-valine + ATP = L-valyl-tRNA(Val) + AMP + diphosphate. Functionally, catalyzes the attachment of valine to tRNA(Val). As ValRS can inadvertently accommodate and process structurally similar amino acids such as threonine, to avoid such errors, it has a 'posttransfer' editing activity that hydrolyzes mischarged Thr-tRNA(Val) in a tRNA-dependent manner. The polypeptide is Valine--tRNA ligase (Chlamydia caviae (strain ATCC VR-813 / DSM 19441 / 03DC25 / GPIC) (Chlamydophila caviae)).